The sequence spans 884 residues: E3 ubiquitin-protein ligase BRE1-like 1 (884 aa).

A disordered region spans residues 1–37 (MGSTGEPDRKRRLSSSVAPGGGAPVSPAKRLAVAPTS). A coiled-coil region spans residues 49 to 86 (YKNQKLSEQLEAHKFEYRALENKFAGLKEKQRTHNETL). The disordered stretch occupies residues 107–127 (KSGSPNSSPGSGHNNVQKDGT). Low complexity predominate over residues 108–121 (SGSPNSSPGSGHNN). 4 coiled-coil regions span residues 216–541 (LNNV…ELKL), 580–663 (SKLE…LQQI), 696–762 (RNLQ…QSLD), and 789–827 (KKRIEDDLEVMSRKASSLRAKARESAVLEKLRHEVKEYR). An RING-type zinc finger spans residues 832–871 (CGICHDRQKEVVITKCYHLFCNQCIQKSLGNRQRRCPSCS).

It belongs to the BRE1 family.

It localises to the nucleus. The enzyme catalyses S-ubiquitinyl-[E2 ubiquitin-conjugating enzyme]-L-cysteine + [acceptor protein]-L-lysine = [E2 ubiquitin-conjugating enzyme]-L-cysteine + N(6)-ubiquitinyl-[acceptor protein]-L-lysine.. It functions in the pathway protein modification; protein ubiquitination. Functionally, E3 ubiquitin-protein ligase that monoubiquitinates H2B to form H2BK143ub1. H2BK143ub1 gives a specific tag for epigenetic transcriptional activation and is also prerequisite for H3K4me and maybe H3K79me. It thereby plays a central role in histone code and gene regulation. Forms a ubiquitin ligase complex in cooperation with the E2 enzyme UBC2/RAD6. This is E3 ubiquitin-protein ligase BRE1-like 1 (BRE1A) from Oryza sativa subsp. indica (Rice).